Reading from the N-terminus, the 401-residue chain is Chorismate synthase (401 aa).

NADP(+) contacts are provided by Arg-40 and Arg-46. Residues 135–137, 256–257, Gly-300, 315–319, and Arg-341 contribute to the FMN site; these read RAS, QA, and KPIST.

It belongs to the chorismate synthase family. As to quaternary structure, homotetramer. FMNH2 is required as a cofactor.

The enzyme catalyses 5-O-(1-carboxyvinyl)-3-phosphoshikimate = chorismate + phosphate. The protein operates within metabolic intermediate biosynthesis; chorismate biosynthesis; chorismate from D-erythrose 4-phosphate and phosphoenolpyruvate: step 7/7. In terms of biological role, catalyzes the anti-1,4-elimination of the C-3 phosphate and the C-6 proR hydrogen from 5-enolpyruvylshikimate-3-phosphate (EPSP) to yield chorismate, which is the branch point compound that serves as the starting substrate for the three terminal pathways of aromatic amino acid biosynthesis. This reaction introduces a second double bond into the aromatic ring system. In Mycobacterium avium (strain 104), this protein is Chorismate synthase.